The sequence spans 318 residues: tRNA U34 carboxymethyltransferase (318 aa).

The carboxy-S-adenosyl-L-methionine site is built by Lys-88, Trp-102, Lys-107, Gly-126, Met-192, Tyr-196, and Arg-311.

This sequence belongs to the class I-like SAM-binding methyltransferase superfamily. CmoB family. In terms of assembly, homotetramer.

The enzyme catalyses carboxy-S-adenosyl-L-methionine + 5-hydroxyuridine(34) in tRNA = 5-carboxymethoxyuridine(34) in tRNA + S-adenosyl-L-homocysteine + H(+). In terms of biological role, catalyzes carboxymethyl transfer from carboxy-S-adenosyl-L-methionine (Cx-SAM) to 5-hydroxyuridine (ho5U) to form 5-carboxymethoxyuridine (cmo5U) at position 34 in tRNAs. This is tRNA U34 carboxymethyltransferase from Pseudomonas fluorescens (strain ATCC BAA-477 / NRRL B-23932 / Pf-5).